Reading from the N-terminus, the 324-residue chain is Acetyl-coenzyme A carboxylase carboxyl transferase subunit alpha (324 aa).

The region spanning 37–291 (KLERRLDKLK…QNFILQEWLR (255 aa)) is the CoA carboxyltransferase C-terminal domain.

The protein belongs to the AccA family. As to quaternary structure, acetyl-CoA carboxylase is a heterohexamer composed of biotin carboxyl carrier protein (AccB), biotin carboxylase (AccC) and two subunits each of ACCase subunit alpha (AccA) and ACCase subunit beta (AccD).

The protein resides in the cytoplasm. It catalyses the reaction N(6)-carboxybiotinyl-L-lysyl-[protein] + acetyl-CoA = N(6)-biotinyl-L-lysyl-[protein] + malonyl-CoA. The protein operates within lipid metabolism; malonyl-CoA biosynthesis; malonyl-CoA from acetyl-CoA: step 1/1. In terms of biological role, component of the acetyl coenzyme A carboxylase (ACC) complex. First, biotin carboxylase catalyzes the carboxylation of biotin on its carrier protein (BCCP) and then the CO(2) group is transferred by the carboxyltransferase to acetyl-CoA to form malonyl-CoA. This Chlamydia caviae (strain ATCC VR-813 / DSM 19441 / 03DC25 / GPIC) (Chlamydophila caviae) protein is Acetyl-coenzyme A carboxylase carboxyl transferase subunit alpha.